The primary structure comprises 284 residues: Large ribosomal subunit protein uL2 (284 aa).

Positions 232–284 are disordered; the sequence is RGTAMNPVDHPHGGGEGRHNGYIPRTPWGKVTKGLKTRDKRKSNKWIVKDRRK. Positions 240-250 are enriched in basic and acidic residues; that stretch reads DHPHGGGEGRH. Positions 264 to 284 are enriched in basic residues; that stretch reads KGLKTRDKRKSNKWIVKDRRK.

This sequence belongs to the universal ribosomal protein uL2 family. As to quaternary structure, part of the 50S ribosomal subunit. Forms a bridge to the 30S subunit in the 70S ribosome.

Its function is as follows. One of the primary rRNA binding proteins. Required for association of the 30S and 50S subunits to form the 70S ribosome, for tRNA binding and peptide bond formation. It has been suggested to have peptidyltransferase activity; this is somewhat controversial. Makes several contacts with the 16S rRNA in the 70S ribosome. This chain is Large ribosomal subunit protein uL2, found in Chlamydia felis (strain Fe/C-56) (Chlamydophila felis).